A 441-amino-acid polypeptide reads, in one-letter code: 3-phosphoshikimate 1-carboxyvinyltransferase (441 aa).

3 residues coordinate 3-phosphoshikimate: lysine 26, serine 27, and arginine 31. Position 26 (lysine 26) interacts with phosphoenolpyruvate. Phosphoenolpyruvate-binding residues include glycine 99 and arginine 127. The 3-phosphoshikimate site is built by serine 173, serine 174, glutamine 175, serine 203, aspartate 320, and lysine 347. Glutamine 175 contacts phosphoenolpyruvate. Residue aspartate 320 is the Proton acceptor of the active site. Phosphoenolpyruvate-binding residues include arginine 351, arginine 393, and lysine 423.

This sequence belongs to the EPSP synthase family. Monomer.

The protein localises to the cytoplasm. The catalysed reaction is 3-phosphoshikimate + phosphoenolpyruvate = 5-O-(1-carboxyvinyl)-3-phosphoshikimate + phosphate. It participates in metabolic intermediate biosynthesis; chorismate biosynthesis; chorismate from D-erythrose 4-phosphate and phosphoenolpyruvate: step 6/7. In terms of biological role, catalyzes the transfer of the enolpyruvyl moiety of phosphoenolpyruvate (PEP) to the 5-hydroxyl of shikimate-3-phosphate (S3P) to produce enolpyruvyl shikimate-3-phosphate and inorganic phosphate. The chain is 3-phosphoshikimate 1-carboxyvinyltransferase from Janthinobacterium sp. (strain Marseille) (Minibacterium massiliensis).